Reading from the N-terminus, the 253-residue chain is 5'/3'-nucleotidase SurE (253 aa).

Residues D8, D9, S39, and N92 each contribute to the a divalent metal cation site.

Belongs to the SurE nucleotidase family. A divalent metal cation is required as a cofactor.

It is found in the cytoplasm. The catalysed reaction is a ribonucleoside 5'-phosphate + H2O = a ribonucleoside + phosphate. The enzyme catalyses a ribonucleoside 3'-phosphate + H2O = a ribonucleoside + phosphate. It carries out the reaction [phosphate](n) + H2O = [phosphate](n-1) + phosphate + H(+). Functionally, nucleotidase with a broad substrate specificity as it can dephosphorylate various ribo- and deoxyribonucleoside 5'-monophosphates and ribonucleoside 3'-monophosphates with highest affinity to 3'-AMP. Also hydrolyzes polyphosphate (exopolyphosphatase activity) with the preference for short-chain-length substrates (P20-25). Might be involved in the regulation of dNTP and NTP pools, and in the turnover of 3'-mononucleotides produced by numerous intracellular RNases (T1, T2, and F) during the degradation of various RNAs. The sequence is that of 5'/3'-nucleotidase SurE from Escherichia coli O7:K1 (strain IAI39 / ExPEC).